The following is a 313-amino-acid chain: Ribosomal protein L11 methyltransferase (313 aa).

Residues threonine 161, glycine 182, aspartate 204, and asparagine 247 each coordinate S-adenosyl-L-methionine.

This sequence belongs to the methyltransferase superfamily. PrmA family.

It localises to the cytoplasm. It carries out the reaction L-lysyl-[protein] + 3 S-adenosyl-L-methionine = N(6),N(6),N(6)-trimethyl-L-lysyl-[protein] + 3 S-adenosyl-L-homocysteine + 3 H(+). Methylates ribosomal protein L11. This is Ribosomal protein L11 methyltransferase from Halalkalibacterium halodurans (strain ATCC BAA-125 / DSM 18197 / FERM 7344 / JCM 9153 / C-125) (Bacillus halodurans).